A 79-amino-acid chain; its full sequence is Small ribosomal subunit protein bS16 (79 aa).

It belongs to the bacterial ribosomal protein bS16 family.

This Oleidesulfovibrio alaskensis (strain ATCC BAA-1058 / DSM 17464 / G20) (Desulfovibrio alaskensis) protein is Small ribosomal subunit protein bS16.